A 319-amino-acid polypeptide reads, in one-letter code: Pantothenate kinase (319 aa).

97 to 104 (GSVAVGKS) contacts ATP.

Belongs to the prokaryotic pantothenate kinase family.

The protein resides in the cytoplasm. It carries out the reaction (R)-pantothenate + ATP = (R)-4'-phosphopantothenate + ADP + H(+). It functions in the pathway cofactor biosynthesis; coenzyme A biosynthesis; CoA from (R)-pantothenate: step 1/5. In Mesorhizobium japonicum (strain LMG 29417 / CECT 9101 / MAFF 303099) (Mesorhizobium loti (strain MAFF 303099)), this protein is Pantothenate kinase.